Here is a 173-residue protein sequence, read N- to C-terminus: ATP synthase subunit b (173 aa).

A helical transmembrane segment spans residues 19 to 39 (IVWSLIILVIVAVFFYKFFMP).

Belongs to the ATPase B chain family. F-type ATPases have 2 components, F(1) - the catalytic core - and F(0) - the membrane proton channel. F(1) has five subunits: alpha(3), beta(3), gamma(1), delta(1), epsilon(1). F(0) has three main subunits: a(1), b(2) and c(10-14). The alpha and beta chains form an alternating ring which encloses part of the gamma chain. F(1) is attached to F(0) by a central stalk formed by the gamma and epsilon chains, while a peripheral stalk is formed by the delta and b chains.

The protein resides in the cell membrane. Functionally, f(1)F(0) ATP synthase produces ATP from ADP in the presence of a proton or sodium gradient. F-type ATPases consist of two structural domains, F(1) containing the extramembraneous catalytic core and F(0) containing the membrane proton channel, linked together by a central stalk and a peripheral stalk. During catalysis, ATP synthesis in the catalytic domain of F(1) is coupled via a rotary mechanism of the central stalk subunits to proton translocation. In terms of biological role, component of the F(0) channel, it forms part of the peripheral stalk, linking F(1) to F(0). This is ATP synthase subunit b from Bifidobacterium longum (strain NCC 2705).